The primary structure comprises 131 residues: Small ribosomal subunit protein uS12 (131 aa).

Position 89 is a 3-methylthioaspartic acid (Asp-89).

Belongs to the universal ribosomal protein uS12 family. In terms of assembly, part of the 30S ribosomal subunit. Contacts proteins S8 and S17. May interact with IF1 in the 30S initiation complex.

Its function is as follows. With S4 and S5 plays an important role in translational accuracy. Interacts with and stabilizes bases of the 16S rRNA that are involved in tRNA selection in the A site and with the mRNA backbone. Located at the interface of the 30S and 50S subunits, it traverses the body of the 30S subunit contacting proteins on the other side and probably holding the rRNA structure together. The combined cluster of proteins S8, S12 and S17 appears to hold together the shoulder and platform of the 30S subunit. The polypeptide is Small ribosomal subunit protein uS12 (Karelsulcia muelleri (strain GWSS) (Sulcia muelleri)).